Consider the following 875-residue polypeptide: Translation initiation factor IF-2 (875 aa).

Disordered stretches follow at residues 123–204 (EKEK…EKPK) and 240–278 (ETKE…PVET). Basic and acidic residues predominate over residues 240 to 252 (ETKEEKAELEALR). Residues 259-268 (PKKKKKKKKK) show a composition bias toward basic residues. Positions 269 to 278 (KEEEKAPVET) are enriched in basic and acidic residues. In terms of domain architecture, tr-type G spans 379-547 (ERPPVVTVMG…NILLVSEILE (169 aa)). The G1 stretch occupies residues 388–395 (GHVDHGKT). 388 to 395 (GHVDHGKT) is a GTP binding site. The segment at 413–417 (GITQH) is G2. The segment at 435 to 438 (DTPG) is G3. Residues 435 to 439 (DTPGH) and 489 to 492 (NKID) each bind GTP. The segment at 489 to 492 (NKID) is G4. Residues 525 to 527 (SAK) are G5.

The protein belongs to the TRAFAC class translation factor GTPase superfamily. Classic translation factor GTPase family. IF-2 subfamily.

The protein resides in the cytoplasm. Its function is as follows. One of the essential components for the initiation of protein synthesis. Protects formylmethionyl-tRNA from spontaneous hydrolysis and promotes its binding to the 30S ribosomal subunits. Also involved in the hydrolysis of GTP during the formation of the 70S ribosomal complex. This chain is Translation initiation factor IF-2, found in Persephonella marina (strain DSM 14350 / EX-H1).